Consider the following 251-residue polypeptide: Imidazole glycerol phosphate synthase subunit HisF (251 aa).

Residues Asp11 and Asp130 contribute to the active site.

It belongs to the HisA/HisF family. In terms of assembly, heterodimer of HisH and HisF.

Its subcellular location is the cytoplasm. The catalysed reaction is 5-[(5-phospho-1-deoxy-D-ribulos-1-ylimino)methylamino]-1-(5-phospho-beta-D-ribosyl)imidazole-4-carboxamide + L-glutamine = D-erythro-1-(imidazol-4-yl)glycerol 3-phosphate + 5-amino-1-(5-phospho-beta-D-ribosyl)imidazole-4-carboxamide + L-glutamate + H(+). The protein operates within amino-acid biosynthesis; L-histidine biosynthesis; L-histidine from 5-phospho-alpha-D-ribose 1-diphosphate: step 5/9. IGPS catalyzes the conversion of PRFAR and glutamine to IGP, AICAR and glutamate. The HisF subunit catalyzes the cyclization activity that produces IGP and AICAR from PRFAR using the ammonia provided by the HisH subunit. This chain is Imidazole glycerol phosphate synthase subunit HisF, found in Chloroherpeton thalassium (strain ATCC 35110 / GB-78).